A 176-amino-acid chain; its full sequence is 3-hydroxydecanoyl-[acyl-carrier-protein] dehydratase (176 aa).

The active site involves His-71.

Belongs to the thioester dehydratase family. FabA subfamily. As to quaternary structure, homodimer.

It is found in the cytoplasm. It carries out the reaction a (3R)-hydroxyacyl-[ACP] = a (2E)-enoyl-[ACP] + H2O. The catalysed reaction is (3R)-hydroxydecanoyl-[ACP] = (2E)-decenoyl-[ACP] + H2O. It catalyses the reaction (2E)-decenoyl-[ACP] = (3Z)-decenoyl-[ACP]. The protein operates within lipid metabolism; fatty acid biosynthesis. In terms of biological role, necessary for the introduction of cis unsaturation into fatty acids. Catalyzes the dehydration of (3R)-3-hydroxydecanoyl-ACP to E-(2)-decenoyl-ACP and then its isomerization to Z-(3)-decenoyl-ACP. Can catalyze the dehydratase reaction for beta-hydroxyacyl-ACPs with saturated chain lengths up to 16:0, being most active on intermediate chain length. The chain is 3-hydroxydecanoyl-[acyl-carrier-protein] dehydratase from Rhodopseudomonas palustris (strain HaA2).